The chain runs to 598 residues: Elongation factor 4 (598 aa).

The tr-type G domain occupies 2-184; that stretch reads KNIRNFSIIA…RLVKEIPAPE (183 aa). GTP contacts are provided by residues 14 to 19 and 131 to 134; these read DHGKST and NKID.

It belongs to the TRAFAC class translation factor GTPase superfamily. Classic translation factor GTPase family. LepA subfamily.

It is found in the cell inner membrane. It carries out the reaction GTP + H2O = GDP + phosphate + H(+). Its function is as follows. Required for accurate and efficient protein synthesis under certain stress conditions. May act as a fidelity factor of the translation reaction, by catalyzing a one-codon backward translocation of tRNAs on improperly translocated ribosomes. Back-translocation proceeds from a post-translocation (POST) complex to a pre-translocation (PRE) complex, thus giving elongation factor G a second chance to translocate the tRNAs correctly. Binds to ribosomes in a GTP-dependent manner. This is Elongation factor 4 from Proteus mirabilis (strain HI4320).